The primary structure comprises 311 residues: Homoserine kinase (311 aa).

88–98 (PEGLGLGSSGA) lines the ATP pocket.

This sequence belongs to the GHMP kinase family. Homoserine kinase subfamily.

It localises to the cytoplasm. The catalysed reaction is L-homoserine + ATP = O-phospho-L-homoserine + ADP + H(+). It participates in amino-acid biosynthesis; L-threonine biosynthesis; L-threonine from L-aspartate: step 4/5. In terms of biological role, catalyzes the ATP-dependent phosphorylation of L-homoserine to L-homoserine phosphate. The polypeptide is Homoserine kinase (Saccharolobus islandicus (strain L.S.2.15 / Lassen #1) (Sulfolobus islandicus)).